The following is a 250-amino-acid chain: Ubiquinone/menaquinone biosynthesis C-methyltransferase UbiE (250 aa).

S-adenosyl-L-methionine-binding positions include serine 73, aspartate 94, and 122 to 123 (NA).

Belongs to the class I-like SAM-binding methyltransferase superfamily. MenG/UbiE family.

The catalysed reaction is a 2-demethylmenaquinol + S-adenosyl-L-methionine = a menaquinol + S-adenosyl-L-homocysteine + H(+). It carries out the reaction a 2-methoxy-6-(all-trans-polyprenyl)benzene-1,4-diol + S-adenosyl-L-methionine = a 5-methoxy-2-methyl-3-(all-trans-polyprenyl)benzene-1,4-diol + S-adenosyl-L-homocysteine + H(+). Its pathway is quinol/quinone metabolism; menaquinone biosynthesis; menaquinol from 1,4-dihydroxy-2-naphthoate: step 2/2. The protein operates within cofactor biosynthesis; ubiquinone biosynthesis. In terms of biological role, methyltransferase required for the conversion of demethylmenaquinol (DMKH2) to menaquinol (MKH2) and the conversion of 2-polyprenyl-6-methoxy-1,4-benzoquinol (DDMQH2) to 2-polyprenyl-3-methyl-6-methoxy-1,4-benzoquinol (DMQH2). The polypeptide is Ubiquinone/menaquinone biosynthesis C-methyltransferase UbiE (Legionella pneumophila subsp. pneumophila (strain Philadelphia 1 / ATCC 33152 / DSM 7513)).